Reading from the N-terminus, the 64-residue chain is Prokaryotic ubiquitin-like protein Pup (64 aa).

A disordered region spans residues 1 to 37; the sequence is MAQEQTQRAGGGEDDETTGGDGSAGQERREKLAAETD. An ARC ATPase binding region spans residues 21-58; it reads DGSAGQERREKLAAETDDLLDEIDDVLEENAEDFVRAY. The stretch at 24-52 forms a coiled coil; that stretch reads AGQERREKLAAETDDLLDEIDDVLEENAE. Gln64 is modified (deamidated glutamine). An Isoglutamyl lysine isopeptide (Gln-Lys) (interchain with K-? in acceptor proteins) cross-link involves residue Gln64.

Belongs to the prokaryotic ubiquitin-like protein family. As to quaternary structure, strongly interacts with the proteasome-associated ATPase ARC through a hydrophobic interface; the interacting region of Pup lies in its C-terminal half. There is one Pup binding site per ARC hexamer ring. Is modified by deamidation of its C-terminal glutamine to glutamate by the deamidase Dop, a prerequisite to the subsequent pupylation process.

The protein operates within protein degradation; proteasomal Pup-dependent pathway. Functionally, protein modifier that is covalently attached to lysine residues of substrate proteins, thereby targeting them for proteasomal degradation. The tagging system is termed pupylation. The polypeptide is Prokaryotic ubiquitin-like protein Pup (Rhodococcus erythropolis (strain PR4 / NBRC 100887)).